The chain runs to 160 residues: NADH-quinone oxidoreductase subunit I (160 aa).

2 4Fe-4S ferredoxin-type domains span residues 52-81 and 91-120; these read RRYS…IEAE and TRYD…EGPN. 8 residues coordinate [4Fe-4S] cluster: C61, C64, C67, C71, C100, C103, C106, and C110.

The protein belongs to the complex I 23 kDa subunit family. NDH-1 is composed of 14 different subunits. Subunits NuoA, H, J, K, L, M, N constitute the membrane sector of the complex. It depends on [4Fe-4S] cluster as a cofactor.

It is found in the cell membrane. It carries out the reaction a quinone + NADH + 5 H(+)(in) = a quinol + NAD(+) + 4 H(+)(out). Functionally, NDH-1 shuttles electrons from NADH, via FMN and iron-sulfur (Fe-S) centers, to quinones in the respiratory chain. The immediate electron acceptor for the enzyme in this species is believed to be ubiquinone. Couples the redox reaction to proton translocation (for every two electrons transferred, four hydrogen ions are translocated across the cytoplasmic membrane), and thus conserves the redox energy in a proton gradient. This Wolbachia sp. subsp. Brugia malayi (strain TRS) protein is NADH-quinone oxidoreductase subunit I.